The chain runs to 418 residues: Deubiquitinase and deneddylase Dub1 (418 aa).

Over residues 1–10 (MLSPTNSISK) the composition is skewed to polar residues. The segment at 1–23 (MLSPTNSISKTAPVPPQDSSKPV) is disordered. The chain crosses the membrane as a helical span at residues 40-60 (TALAVLLVVVTLGLILLFYSF). The interval 72–144 (TRPSTKEQPT…PLPPKAPKPV (73 aa)) is disordered. Pro residues predominate over residues 86-141 (VPLPSPPLAVPRPSTPPPPVISRPSTPPAPTPAISPPSTPSAPKPSTPPPLPPKAP). Catalysis depends on residues His-288, Asp-305, and Cys-358.

It belongs to the peptidase C48 family.

It localises to the secreted. Its subcellular location is the host cell. The protein resides in the membrane. In terms of biological role, effector proteins function to alter host cell physiology and promote bacterial survival in host tissues. This protease possesses deubiquitinating and deneddylating activities. The sequence is that of Deubiquitinase and deneddylase Dub1 (cdu1) from Chlamydia trachomatis serovar B (strain TZ1A828/OT).